Consider the following 1703-residue polypeptide: Gingipain R1 (1703 aa).

An N-terminal signal peptide occupies residues 1-20 (MNKFVSIALCSSLLGGMAFA). Positions 21–224 (QQTELGRNPN…RMFMNYEPGR (204 aa)) are excised as a propeptide. Ca(2+) contacts are provided by Asp-302, Val-324, Asp-327, Tyr-329, Glu-331, Glu-385, and His-390. His-435 (proton donor) is an active-site residue. Residue Cys-468 is the Nucleophile of the active site. Residues Phe-473, Glu-482, Asp-516, Glu-517, Glu-520, and His-526 each coordinate Ca(2+). The disordered stretch occupies residues 940 to 968 (WDAPNGTPNPNPNPNPNPNPGTTTLSESF). Over residues 946–958 (TPNPNPNPNPNPN) the composition is skewed to pro residues.

The protein belongs to the peptidase C25 family.

The protein localises to the secreted. The enzyme catalyses Hydrolysis of proteins and small molecule substrates, with a preference for Arg in P1.. In terms of biological role, thiol protease. Acts synergistically with RgpB to catalyze the maturation of fimbrial subunits, such as FimA. Its proteolytic activity is a major factor in both periodontal tissue destruction and in evasion of host defense mechanisms. The polypeptide is Gingipain R1 (Porphyromonas gingivalis (strain ATCC 33277 / DSM 20709 / CIP 103683 / JCM 12257 / NCTC 11834 / 2561)).